A 453-amino-acid chain; its full sequence is MASPSLPGSDCSQIIDHSHVPEFEVATWIKITLILVYLIIFVMGLLGNSATIRVTQVLQKKGYLQKEVTDHMVSLACSDILVFLIGMPMEFYSIIWNPLTTSSYTLSCKLHTFLFEACSYATLLHVLTLSFERYIAICHPFRYKAVSGPCQVKLLIGFVWVTSALVALPLLFAMGTEYPLVNVPSHRGLTCNRSSTRHHEQPETSNMSICTNLSSRWTVFQSSIFGAFVVYLVVLLSVAFMCWNMMQVLMKSQKGSLAGGTRPPQLRKSESEESRTARRQTIIFLRLIVVTLAVCWMPNQIRRIMAAAKPKHDWTRSYFRAYMILLPFSETFFYLSSVINPLLYTVSSQQFRRVFVQVLCCRLSLQHANHEKRLRVHAHSTTDSARFVQRPLLFASRRQSSARRTEKIFLSTFQSEAEPQSKSQSLSLESLEPNSGAKPANSAAENGFQEHEV.

Over 1 to 34 (MASPSLPGSDCSQIIDHSHVPEFEVATWIKITLI) the chain is Extracellular. 2 disulfides stabilise this stretch: Cys11–Cys191 and Cys108–Cys210. The Zn(2+) site is built by His17 and His19. Residues 35 to 55 (LVYLIIFVMGLLGNSATIRVT) traverse the membrane as a helical segment. Over 56-69 (QVLQKKGYLQKEVT) the chain is Cytoplasmic. A helical transmembrane segment spans residues 70–89 (DHMVSLACSDILVFLIGMPM). Residues 90–109 (EFYSIIWNPLTTSSYTLSCK) lie on the Extracellular side of the membrane. A helical transmembrane segment spans residues 110 to 131 (LHTFLFEACSYATLLHVLTLSF). Over 132–151 (ERYIAICHPFRYKAVSGPCQ) the chain is Cytoplasmic. Residues 152-172 (VKLLIGFVWVTSALVALPLLF) traverse the membrane as a helical segment. At 173-217 (AMGTEYPLVNVPSHRGLTCNRSSTRHHEQPETSNMSICTNLSSRW) the chain is on the extracellular side. Asn192, Asn206, and Asn212 each carry an N-linked (GlcNAc...) asparagine glycan. Residues 218-242 (TVFQSSIFGAFVVYLVVLLSVAFMC) traverse the membrane as a helical segment. The Cytoplasmic segment spans residues 243-283 (WNMMQVLMKSQKGSLAGGTRPPQLRKSESEESRTARRQTII). The interval 255–274 (GSLAGGTRPPQLRKSESEES) is disordered. A helical membrane pass occupies residues 284–305 (FLRLIVVTLAVCWMPNQIRRIM). Residues 306-323 (AAAKPKHDWTRSYFRAYM) lie on the Extracellular side of the membrane. The helical transmembrane segment at 324–344 (ILLPFSETFFYLSSVINPLLY) threads the bilayer. At 345–453 (TVSSQQFRRV…AENGFQEHEV (109 aa)) the chain is on the cytoplasmic side. Ser396 bears the Phosphoserine mark. A disordered region spans residues 415-453 (SEAEPQSKSQSLSLESLEPNSGAKPANSAAENGFQEHEV). The segment covering 418-435 (EPQSKSQSLSLESLEPNS) has biased composition (low complexity).

It belongs to the G-protein coupled receptor 1 family. In terms of assembly, interacts with HTR1A. Interacts with GALR1. As to expression, expressed in many tissues, including the stomach, intestine and hypothalamus.

It is found in the cell membrane. In terms of biological role, zinc-sensing receptor that can sense changes in extracellular Zn(2+), mediate Zn(2+) signal transmission, and participates in the regulation of numerous physiological processes including glucose homeostasis regulation, gastrointestinal mobility, hormone secretion and cell death. Activation by Zn(2+) in keratinocytes increases the intracellular concentration of Ca(2+) and activates the ERK/MAPK and PI3K/AKT signaling pathways leading to epithelial repair. Plays an essential role in normal wound healing by inducing the production of cytokines including the major inflammatory cytokine IL6 via the PKC/MAPK/CEBPB pathway. Regulates adipose tissue metabolism, especially lipolysis, and regulates the function of lipases, such as hormone-sensitive lipase and adipose triglyceride lipase. Plays a role in the inhibition of cell death and protects against oxidative, endoplasmic reticulum and mitochondrial stress by inducing secretion of the cytoprotective pigment epithelium-derived growth factor (PEDF) and probably other protective transcripts in a GNA13/RHOA/SRE-dependent manner. Forms dynamic heteroreceptor complexes with HTR1A and GALR1 depending on cell type or specific physiological states, resulting in signaling diversity: HTR1A-GPR39 shows additive increase in signaling along the serum response element (SRE) and NF-kappa-B pathways while GALR1 acts as an antagonist blocking SRE. This chain is G-protein coupled receptor 39 (GPR39), found in Homo sapiens (Human).